Reading from the N-terminus, the 478-residue chain is Violaxanthin de-epoxidase, chloroplastic (478 aa).

Positions 388–453 (LVERLEKKVE…RELSKEEMDV (66 aa)) form a coiled coil.

This sequence belongs to the calycin superfamily. Lipocalin family.

It localises to the plastid. Its subcellular location is the chloroplast thylakoid membrane. It catalyses the reaction all-trans-violaxanthin + 2 L-ascorbate = all-trans-zeaxanthin + 2 L-dehydroascorbate + 2 H2O. Part of the xanthophyll (or violaxanthin) cycle for controlling the concentration of zeaxanthin in chloroplasts. Catalyzes the two-step mono de-epoxidation reaction. Stereospecific for all-trans xanthophylls. Zeaxanthin induces the dissipation of excitation energy in the chlorophyll of the light-harvesting protein complex of photosystem II. The chain is Violaxanthin de-epoxidase, chloroplastic (VDE1) from Nicotiana tabacum (Common tobacco).